The following is a 234-amino-acid chain: Ubiquinone biosynthesis O-methyltransferase (234 aa).

Arginine 40, glycine 59, aspartate 80, and methionine 123 together coordinate S-adenosyl-L-methionine.

This sequence belongs to the methyltransferase superfamily. UbiG/COQ3 family.

The enzyme catalyses a 3-demethylubiquinol + S-adenosyl-L-methionine = a ubiquinol + S-adenosyl-L-homocysteine + H(+). It carries out the reaction a 3-(all-trans-polyprenyl)benzene-1,2-diol + S-adenosyl-L-methionine = a 2-methoxy-6-(all-trans-polyprenyl)phenol + S-adenosyl-L-homocysteine + H(+). Its pathway is cofactor biosynthesis; ubiquinone biosynthesis. O-methyltransferase that catalyzes the 2 O-methylation steps in the ubiquinone biosynthetic pathway. The polypeptide is Ubiquinone biosynthesis O-methyltransferase (Coxiella burnetii (strain CbuG_Q212) (Coxiella burnetii (strain Q212))).